Here is a 552-residue protein sequence, read N- to C-terminus: Probable malate:quinone oxidoreductase (552 aa).

The segment at 530-552 is disordered; it reads DAKPATPEAKPAQASSPQHDMAL. The segment covering 542–552 has biased composition (polar residues); sequence QASSPQHDMAL.

The protein belongs to the MQO family. FAD is required as a cofactor.

The catalysed reaction is (S)-malate + a quinone = a quinol + oxaloacetate. The protein operates within carbohydrate metabolism; tricarboxylic acid cycle; oxaloacetate from (S)-malate (quinone route): step 1/1. The protein is Probable malate:quinone oxidoreductase of Cronobacter sakazakii (strain ATCC BAA-894) (Enterobacter sakazakii).